The chain runs to 417 residues: UDP-N-acetylglucosamine 1-carboxyvinyltransferase (417 aa).

Residue 22–23 participates in phosphoenolpyruvate binding; sequence KN. Arg-93 is a UDP-N-acetyl-alpha-D-glucosamine binding site. Cys-117 (proton donor) is an active-site residue. Cys-117 carries the post-translational modification 2-(S-cysteinyl)pyruvic acid O-phosphothioketal. UDP-N-acetyl-alpha-D-glucosamine is bound by residues 122-126, Asp-305, and Ile-327; that span reads RPVDQ.

This sequence belongs to the EPSP synthase family. MurA subfamily.

It is found in the cytoplasm. The enzyme catalyses phosphoenolpyruvate + UDP-N-acetyl-alpha-D-glucosamine = UDP-N-acetyl-3-O-(1-carboxyvinyl)-alpha-D-glucosamine + phosphate. Its pathway is cell wall biogenesis; peptidoglycan biosynthesis. Cell wall formation. Adds enolpyruvyl to UDP-N-acetylglucosamine. The chain is UDP-N-acetylglucosamine 1-carboxyvinyltransferase from Dechloromonas aromatica (strain RCB).